The chain runs to 54 residues: Large ribosomal subunit protein bL33 (54 aa).

It belongs to the bacterial ribosomal protein bL33 family.

This chain is Large ribosomal subunit protein bL33, found in Opitutus terrae (strain DSM 11246 / JCM 15787 / PB90-1).